The chain runs to 1297 residues: DNA-directed RNA polymerase subunit beta' (1297 aa).

Residues cysteine 60, cysteine 62, cysteine 75, and cysteine 78 each contribute to the Zn(2+) site. Mg(2+) is bound by residues aspartate 535, aspartate 537, and aspartate 539. Positions 883, 961, 968, and 971 each coordinate Zn(2+).

This sequence belongs to the RNA polymerase beta' chain family. In terms of assembly, the RNAP catalytic core consists of 2 alpha, 1 beta, 1 beta' and 1 omega subunit. When a sigma factor is associated with the core the holoenzyme is formed, which can initiate transcription. It depends on Mg(2+) as a cofactor. Zn(2+) serves as cofactor.

It carries out the reaction RNA(n) + a ribonucleoside 5'-triphosphate = RNA(n+1) + diphosphate. Its function is as follows. DNA-dependent RNA polymerase catalyzes the transcription of DNA into RNA using the four ribonucleoside triphosphates as substrates. In Salinispora arenicola (strain CNS-205), this protein is DNA-directed RNA polymerase subunit beta'.